The chain runs to 71 residues: Conotoxin Ca5.1 (71 aa).

Residues 1–19 (MRCVPVFIILLLLASPAAS) form the signal peptide. Positions 20 to 56 (DPLEKRIQSDLIRAALEDADTKNDPRILEDIVSTALA) are excised as a propeptide.

Belongs to the conotoxin T superfamily. Contains 2 disulfide bonds that can be either 'C1-C3, C2-C4' or 'C1-C4, C2-C3', since these disulfide connectivities have been observed for conotoxins with cysteine framework V (for examples, see AC P0DQQ7 and AC P81755). As to expression, expressed by the venom duct.

The protein localises to the secreted. In Conus caracteristicus (Characteristic cone), this protein is Conotoxin Ca5.1.